We begin with the raw amino-acid sequence, 212 residues long: Ras-related protein Rab-15 (212 aa).

GTP contacts are provided by Ser-17, Gly-18, Val-19, Gly-20, Lys-21, Thr-22, Cys-23, Ser-35, Ser-39, and Thr-40. Thr-22 is a Mg(2+) binding site. 2 short sequence motifs (switch) span residues Asn-31–Phe-45 and Asp-63–Arg-80. Mg(2+)-binding residues include Thr-40 and Asp-63. The GTP site is built by Gly-66, Asn-121, Lys-122, Asp-124, Ser-151, and Ala-152. The tract at residues Glu-192–Cys-212 is disordered. 2 S-geranylgeranyl cysteine lipidation sites follow: Cys-210 and Cys-212. Cys-212 is subject to Cysteine methyl ester.

Belongs to the small GTPase superfamily. Rab family. The GTP bound form of RAB15 interacts with REP15. Interacts (GTP-bound form) with MICAL1, MICAL3, MICALCL, EHBP1 and EHBP1L1. It depends on Mg(2+) as a cofactor.

It is found in the cell membrane. The enzyme catalyses GTP + H2O = GDP + phosphate + H(+). Its activity is regulated as follows. Regulated by guanine nucleotide exchange factors (GEFs) which promote the exchange of bound GDP for free GTP. Regulated by GTPase activating proteins (GAPs) which increase the GTP hydrolysis activity. Inhibited by GDP dissociation inhibitors (GDIs). The small GTPases Rab are key regulators of intracellular membrane trafficking, from the formation of transport vesicles to their fusion with membranes. Rabs cycle between an inactive GDP-bound form and an active GTP-bound form that is able to recruit to membranes different sets of downstream effectors directly responsible for vesicle formation, movement, tethering and fusion. RAB15 may act in concert with RAB3A in regulating aspects of synaptic vesicle membrane flow within the nerve terminal. The chain is Ras-related protein Rab-15 from Mus musculus (Mouse).